A 350-amino-acid chain; its full sequence is Heat-inducible transcription repressor HrcA (350 aa).

It belongs to the HrcA family.

Negative regulator of class I heat shock genes (grpE-dnaK-dnaJ and groELS operons). Prevents heat-shock induction of these operons. The protein is Heat-inducible transcription repressor HrcA of Limosilactobacillus reuteri (strain DSM 20016) (Lactobacillus reuteri).